A 589-amino-acid chain; its full sequence is Aspartate--tRNA ligase (589 aa).

E175 contacts L-aspartate. The tract at residues Q199–K202 is aspartate. R221 contacts L-aspartate. ATP is bound by residues R221–E223 and Q230. Residue H449 participates in L-aspartate binding. E483 contributes to the ATP binding site. R490 is a binding site for L-aspartate. G535–R538 is an ATP binding site.

The protein belongs to the class-II aminoacyl-tRNA synthetase family. Type 1 subfamily. Homodimer.

The protein localises to the cytoplasm. The enzyme catalyses tRNA(Asp) + L-aspartate + ATP = L-aspartyl-tRNA(Asp) + AMP + diphosphate. Functionally, catalyzes the attachment of L-aspartate to tRNA(Asp) in a two-step reaction: L-aspartate is first activated by ATP to form Asp-AMP and then transferred to the acceptor end of tRNA(Asp). The polypeptide is Aspartate--tRNA ligase (Lysinibacillus sphaericus (strain C3-41)).